Reading from the N-terminus, the 257-residue chain is Acetylglutamate kinase (257 aa).

Substrate contacts are provided by residues 41 to 42, arginine 63, and asparagine 155; that span reads GG.

This sequence belongs to the acetylglutamate kinase family. ArgB subfamily.

Its subcellular location is the cytoplasm. It carries out the reaction N-acetyl-L-glutamate + ATP = N-acetyl-L-glutamyl 5-phosphate + ADP. It participates in amino-acid biosynthesis; L-arginine biosynthesis; N(2)-acetyl-L-ornithine from L-glutamate: step 2/4. Catalyzes the ATP-dependent phosphorylation of N-acetyl-L-glutamate. This is Acetylglutamate kinase from Solibacter usitatus (strain Ellin6076).